Here is a 466-residue protein sequence, read N- to C-terminus: UDP-N-acetylmuramate--L-alanine ligase (466 aa).

An ATP-binding site is contributed by 114-120 (GTHGKTT).

Belongs to the MurCDEF family.

Its subcellular location is the cytoplasm. It carries out the reaction UDP-N-acetyl-alpha-D-muramate + L-alanine + ATP = UDP-N-acetyl-alpha-D-muramoyl-L-alanine + ADP + phosphate + H(+). Its pathway is cell wall biogenesis; peptidoglycan biosynthesis. Functionally, cell wall formation. The sequence is that of UDP-N-acetylmuramate--L-alanine ligase from Chlorobium phaeobacteroides (strain DSM 266 / SMG 266 / 2430).